Consider the following 280-residue polypeptide: Tryptophan 2,3-dioxygenase (280 aa).

Substrate contacts are provided by residues 47 to 51 (FVVQH), Tyr-109, and Arg-113. His-236 lines the heme pocket. Position 250 (Thr-250) interacts with substrate.

Belongs to the tryptophan 2,3-dioxygenase family. In terms of assembly, homotetramer. Heme serves as cofactor.

The catalysed reaction is L-tryptophan + O2 = N-formyl-L-kynurenine. The protein operates within amino-acid degradation; L-tryptophan degradation via kynurenine pathway; L-kynurenine from L-tryptophan: step 1/2. Heme-dependent dioxygenase that catalyzes the oxidative cleavage of the L-tryptophan (L-Trp) pyrrole ring and converts L-tryptophan to N-formyl-L-kynurenine. Catalyzes the oxidative cleavage of the indole moiety. The polypeptide is Tryptophan 2,3-dioxygenase (Serratia proteamaculans (strain 568)).